The sequence spans 625 residues: Vitamin B12 transporter BtuB (625 aa).

Positions 1 to 21 are cleaved as a signal peptide; the sequence is MTIKKYTLLTALSVTAFSGWA. The TonB box motif lies at 31–38; it reads DEMVVTAN. The region spanning 43–157 is the TBDR plug domain; it reads PKSSVLAPVD…IGGVINILTG (115 aa). Residues Ser90, Asn97, and 115–116 contribute to the cyanocob(III)alamin site; that span reads IT. In terms of domain architecture, TBDR beta-barrel spans 160–625; the sequence is KPGTTLSAGL…EYYFTGSYNF (466 aa). A run of 3 beta stranded transmembrane segments spans residues 163 to 170, 174 to 183, and 189 to 200; these read TTLSAGLG, YQTYDGSTQQ, and TTVTLAGNYTYS. Ca(2+) is bound by residues Asp204, Gln217, Asp219, and Asp221. The next 2 membrane-spanning stretches (beta stranded) occupy residues 223 to 233 and 238 to 254; these read FMGKMLWAGLE and EQFN…NRSD. Ca(2+)-binding residues include Tyr255, Asp256, and Asp269. Transmembrane regions (beta stranded) follow at residues 271–285, 287–304, 317–333, 336–345, 363–379, 381–391, 395–410, 413–427, 445–454, 460–469, 484–501, 505–520, 528–540, and 546–561; these read RKLS…LRYK, GIYA…KDYN, SLDE…NTFQ, NGMISAGADW, FTQH…QQIS, VTLEGAVRSDD, FGWH…WEFI, YRLI…KAPN, ESKQWEGGVE, LTWRLSAYRN, YFNI…TGSF, PLSH…PRNA, RRAK…QLDW, and DWSV…YDKD. Ser317 serves as a coordination point for cyanocob(III)alamin. Arg528 contributes to the cyanocob(III)alamin binding site. Tyr562 is a cyanocob(III)alamin binding site. 3 beta stranded membrane-spanning segments follow: residues 569–583, 596–607, and 613–625; these read TVEL…LAVS, IANLFDKDYEMV, and PGRE…SYNF. The TonB C-terminal box motif lies at 608 to 625; it reads YGYQTPGREYYFTGSYNF.

This sequence belongs to the TonB-dependent receptor family. BtuB (TC 1.B.14.3.1) subfamily.

It localises to the cell outer membrane. Its function is as follows. Involved in the active translocation of vitamin B12 (cyanocobalamin) across the outer membrane to the periplasmic space. It derives its energy for transport by interacting with the trans-periplasmic membrane protein TonB. This Yersinia pestis bv. Antiqua (strain Antiqua) protein is Vitamin B12 transporter BtuB.